The following is a 160-amino-acid chain: Bacterial microcompartment shell protein PduK (160 aa).

One can recognise a BMC domain in the interval 11–96; that stretch reads SLGLLEVCGL…PGEGILLAET (86 aa).

It belongs to the bacterial microcompartments protein family. Interacts with shell proteins PduA and PduP and assembly protein PduM. Fe cation is required as a cofactor.

Its subcellular location is the bacterial microcompartment. It functions in the pathway polyol metabolism; 1,2-propanediol degradation. Functionally, a minor shell protein of the bacterial microcompartment (BMC) dedicated to 1,2-propanediol (1,2-PD) degradation. The isolated BMC shell component protein ratio for J:A:B':B:K:T:U is approximately 15:10:7:6:1:1:2. Not required for structural integrity of BMCs nor to mitigate propionaldehyde toxicity, it might be involved in spatial organization of BMCs. In terms of biological role, the 1,2-PD-specific bacterial microcompartment (BMC) concentrates low levels of 1,2-PD catabolic enzymes, concentrates volatile reaction intermediates thus enhancing pathway flux and keeps the level of toxic, mutagenic propionaldehyde low. The sequence is that of Bacterial microcompartment shell protein PduK from Salmonella typhimurium (strain LT2 / SGSC1412 / ATCC 700720).